The primary structure comprises 37 residues: Large ribosomal subunit protein bL36 (37 aa).

Belongs to the bacterial ribosomal protein bL36 family.

The chain is Large ribosomal subunit protein bL36 from Mesomycoplasma hyopneumoniae (strain 7448) (Mycoplasma hyopneumoniae).